Here is a 352-residue protein sequence, read N- to C-terminus: uncharacterized protein (352 aa).

This sequence to M.pneumoniae MPN_633 (in the N-terminal section), and M.pneumoniae MPN_634 (in the C-terminal section).

This is an uncharacterized protein from Mycoplasma pneumoniae (strain ATCC 29342 / M129 / Subtype 1) (Mycoplasmoides pneumoniae).